A 333-amino-acid chain; its full sequence is Cytochrome f (333 aa).

A signal peptide spans 1–44 (MRNASVTARLTRSVRAIVKTLLIAIATVTFYFSCDLALPQSAAA). Residues tyrosine 45, cysteine 66, cysteine 69, and histidine 70 each coordinate heme. A helical membrane pass occupies residues 301-318 (GLIAFVALVMLAQVMLVL).

It belongs to the cytochrome f family. The 4 large subunits of the cytochrome b6-f complex are cytochrome b6, subunit IV (17 kDa polypeptide, PetD), cytochrome f and the Rieske protein, while the 4 small subunits are PetG, PetL, PetM and PetN. The complex functions as a dimer. Heme is required as a cofactor.

The protein localises to the cellular thylakoid membrane. Functionally, component of the cytochrome b6-f complex, which mediates electron transfer between photosystem II (PSII) and photosystem I (PSI), cyclic electron flow around PSI, and state transitions. This Desmonostoc sp. (strain PCC 7906) (Nostoc sp. (strain PCC 7906)) protein is Cytochrome f (petA).